We begin with the raw amino-acid sequence, 312 residues long: Acetyl-coenzyme A carboxylase carboxyl transferase subunit alpha (312 aa).

The CoA carboxyltransferase C-terminal domain occupies arginine 36 to threonine 286.

Belongs to the AccA family. As to quaternary structure, acetyl-CoA carboxylase is a heterohexamer composed of biotin carboxyl carrier protein (AccB), biotin carboxylase (AccC) and two subunits each of ACCase subunit alpha (AccA) and ACCase subunit beta (AccD).

It localises to the cytoplasm. It carries out the reaction N(6)-carboxybiotinyl-L-lysyl-[protein] + acetyl-CoA = N(6)-biotinyl-L-lysyl-[protein] + malonyl-CoA. It functions in the pathway lipid metabolism; malonyl-CoA biosynthesis; malonyl-CoA from acetyl-CoA: step 1/1. Component of the acetyl coenzyme A carboxylase (ACC) complex. First, biotin carboxylase catalyzes the carboxylation of biotin on its carrier protein (BCCP) and then the CO(2) group is transferred by the carboxyltransferase to acetyl-CoA to form malonyl-CoA. This is Acetyl-coenzyme A carboxylase carboxyl transferase subunit alpha from Helicobacter pylori (strain J99 / ATCC 700824) (Campylobacter pylori J99).